A 181-amino-acid polypeptide reads, in one-letter code: MQLRGTTIVAVRTEAGVAVAGDGQVTLGQAIAVKHTARKVRRMYKDKVVIGFAGATADAFTLFERFEAKLEEFGGNLVRASVELAKDWRKDKYLRRLEAMMIVADAGNVLILSGTGDVIEPDDGVAAIGSGGPYAMAAARALLRNTELSAREIVEKSMAIAAEMCVYTNDQLVVETLEKPA.

The active site involves Thr6. The Na(+) site is built by Ala162, Cys165, and Thr168.

The protein belongs to the peptidase T1B family. HslV subfamily. As to quaternary structure, a double ring-shaped homohexamer of HslV is capped on each side by a ring-shaped HslU homohexamer. The assembly of the HslU/HslV complex is dependent on binding of ATP.

It localises to the cytoplasm. The enzyme catalyses ATP-dependent cleavage of peptide bonds with broad specificity.. With respect to regulation, allosterically activated by HslU binding. In terms of biological role, protease subunit of a proteasome-like degradation complex believed to be a general protein degrading machinery. The chain is ATP-dependent protease subunit HslV from Solidesulfovibrio magneticus (strain ATCC 700980 / DSM 13731 / RS-1) (Desulfovibrio magneticus).